The sequence spans 491 residues: Acetylcholine receptor subunit epsilon (491 aa).

Positions 1 to 20 (MAGALLCALLLLQLLGRGEG) are cleaved as a signal peptide. Topologically, residues 21–239 (KNEELRLYHY…VIYSLIIRRK (219 aa)) are extracellular. Asn-86 and Asn-161 each carry an N-linked (GlcNAc...) asparagine glycan. Cysteines 148 and 162 form a disulfide. A helical membrane pass occupies residues 240–264 (PLFYVINIIVPCVLISGLVLLAYFL). Residues 265–272 (PAQAGGQK) lie on the Cytoplasmic side of the membrane. A helical membrane pass occupies residues 273 to 291 (CTVSINVLLAQTVFLFLIA). The Extracellular segment spans residues 292–306 (QKTPETSLSVPLLGR). The helical transmembrane segment at 307-328 (YLIFVMVVATLIVMNCVIVLNV) threads the bilayer. Topologically, residues 329 to 456 (SLRTPTTHAM…WVRMGKALDS (128 aa)) are cytoplasmic. The helical transmembrane segment at 457-480 (ICFWAALVLFLVGSSLIFLGAYFN) threads the bilayer. The Extracellular segment spans residues 481 to 491 (RVPQLPYPPCM).

This sequence belongs to the ligand-gated ion channel (TC 1.A.9) family. Acetylcholine receptor (TC 1.A.9.1) subfamily. Epsilon/CHRNE sub-subfamily.

The protein resides in the postsynaptic cell membrane. It localises to the cell membrane. It catalyses the reaction K(+)(in) = K(+)(out). It carries out the reaction Na(+)(in) = Na(+)(out). In terms of biological role, after binding acetylcholine, the AChR responds by an extensive change in conformation that affects all subunits and leads to opening of an ion-conducting channel across the plasma membrane. This Bos taurus (Bovine) protein is Acetylcholine receptor subunit epsilon (CHRNE).